Reading from the N-terminus, the 248-residue chain is 3-deoxy-manno-octulosonate cytidylyltransferase (248 aa).

This sequence belongs to the KdsB family.

It is found in the cytoplasm. The catalysed reaction is 3-deoxy-alpha-D-manno-oct-2-ulosonate + CTP = CMP-3-deoxy-beta-D-manno-octulosonate + diphosphate. It participates in nucleotide-sugar biosynthesis; CMP-3-deoxy-D-manno-octulosonate biosynthesis; CMP-3-deoxy-D-manno-octulosonate from 3-deoxy-D-manno-octulosonate and CTP: step 1/1. It functions in the pathway bacterial outer membrane biogenesis; lipopolysaccharide biosynthesis. Functionally, activates KDO (a required 8-carbon sugar) for incorporation into bacterial lipopolysaccharide in Gram-negative bacteria. This chain is 3-deoxy-manno-octulosonate cytidylyltransferase, found in Klebsiella pneumoniae (strain 342).